A 251-amino-acid chain; its full sequence is Octanoyltransferase (251 aa).

One can recognise a BPL/LPL catalytic domain in the interval 49 to 230; the sequence is DEIPDQLLIL…ALDDALAGRL (182 aa). Substrate contacts are provided by residues 87–94, 160–162, and 173–175; these read RGGRITWH, AIG, and GVA. Catalysis depends on Cys191, which acts as the Acyl-thioester intermediate.

This sequence belongs to the LipB family.

Its subcellular location is the cytoplasm. The enzyme catalyses octanoyl-[ACP] + L-lysyl-[protein] = N(6)-octanoyl-L-lysyl-[protein] + holo-[ACP] + H(+). It functions in the pathway protein modification; protein lipoylation via endogenous pathway; protein N(6)-(lipoyl)lysine from octanoyl-[acyl-carrier-protein]: step 1/2. In terms of biological role, catalyzes the transfer of endogenously produced octanoic acid from octanoyl-acyl-carrier-protein onto the lipoyl domains of lipoate-dependent enzymes. Lipoyl-ACP can also act as a substrate although octanoyl-ACP is likely to be the physiological substrate. This chain is Octanoyltransferase, found in Corynebacterium glutamicum (strain R).